The following is a 465-amino-acid chain: UDP-N-acetylmuramate--L-alanine ligase (465 aa).

115–121 (GTHGKTT) contacts ATP.

It belongs to the MurCDEF family.

The protein localises to the cytoplasm. It carries out the reaction UDP-N-acetyl-alpha-D-muramate + L-alanine + ATP = UDP-N-acetyl-alpha-D-muramoyl-L-alanine + ADP + phosphate + H(+). The protein operates within cell wall biogenesis; peptidoglycan biosynthesis. Cell wall formation. The chain is UDP-N-acetylmuramate--L-alanine ligase from Renibacterium salmoninarum (strain ATCC 33209 / DSM 20767 / JCM 11484 / NBRC 15589 / NCIMB 2235).